The sequence spans 558 residues: Dihydroxy-acid dehydratase (558 aa).

Cys-48 is a [2Fe-2S] cluster binding site. Asp-80 is a binding site for Mg(2+). Cys-121 is a binding site for [2Fe-2S] cluster. The Mg(2+) site is built by Asp-122 and Lys-123. N6-carboxylysine is present on Lys-123. A [2Fe-2S] cluster-binding site is contributed by Cys-193. Residue Glu-445 coordinates Mg(2+). Residue Ser-471 is the Proton acceptor of the active site.

Belongs to the IlvD/Edd family. As to quaternary structure, homodimer. [2Fe-2S] cluster is required as a cofactor. Mg(2+) serves as cofactor.

It catalyses the reaction (2R)-2,3-dihydroxy-3-methylbutanoate = 3-methyl-2-oxobutanoate + H2O. The enzyme catalyses (2R,3R)-2,3-dihydroxy-3-methylpentanoate = (S)-3-methyl-2-oxopentanoate + H2O. The protein operates within amino-acid biosynthesis; L-isoleucine biosynthesis; L-isoleucine from 2-oxobutanoate: step 3/4. It functions in the pathway amino-acid biosynthesis; L-valine biosynthesis; L-valine from pyruvate: step 3/4. Functionally, functions in the biosynthesis of branched-chain amino acids. Catalyzes the dehydration of (2R,3R)-2,3-dihydroxy-3-methylpentanoate (2,3-dihydroxy-3-methylvalerate) into 2-oxo-3-methylpentanoate (2-oxo-3-methylvalerate) and of (2R)-2,3-dihydroxy-3-methylbutanoate (2,3-dihydroxyisovalerate) into 2-oxo-3-methylbutanoate (2-oxoisovalerate), the penultimate precursor to L-isoleucine and L-valine, respectively. The protein is Dihydroxy-acid dehydratase of Prochlorococcus marinus (strain SARG / CCMP1375 / SS120).